We begin with the raw amino-acid sequence, 175 residues long: Small ribosomal subunit protein uS9 (175 aa).

This sequence belongs to the universal ribosomal protein uS9 family.

This Streptomyces griseus subsp. griseus (strain JCM 4626 / CBS 651.72 / NBRC 13350 / KCC S-0626 / ISP 5235) protein is Small ribosomal subunit protein uS9.